The chain runs to 124 residues: uncharacterized protein (124 aa).

The protein belongs to the asfivirus H124R family.

The protein localises to the virion. This is an uncharacterized protein from Ornithodoros (relapsing fever ticks).